We begin with the raw amino-acid sequence, 87 residues long: HssA/B-like protein 7 (87 aa).

Over residues 1-22 (MSILSALTSISNPMKSTKSSVA) the composition is skewed to polar residues. Positions 1 to 23 (MSILSALTSISNPMKSTKSSVAN) are disordered.

The protein belongs to the hssA/B family.

The chain is HssA/B-like protein 7 (hssl7) from Dictyostelium discoideum (Social amoeba).